We begin with the raw amino-acid sequence, 228 residues long: 2,3-bisphosphoglycerate-dependent phosphoglycerate mutase (228 aa).

Residues R8 to N15, T21 to G22, R60, E87 to Y90, K98, R114 to R115, and G183 to N184 contribute to the substrate site. Residue H9 is the Tele-phosphohistidine intermediate of the active site. The active-site Proton donor/acceptor is the E87.

Belongs to the phosphoglycerate mutase family. BPG-dependent PGAM subfamily.

The catalysed reaction is (2R)-2-phosphoglycerate = (2R)-3-phosphoglycerate. The protein operates within carbohydrate degradation; glycolysis; pyruvate from D-glyceraldehyde 3-phosphate: step 3/5. In terms of biological role, catalyzes the interconversion of 2-phosphoglycerate and 3-phosphoglycerate. The chain is 2,3-bisphosphoglycerate-dependent phosphoglycerate mutase from Enterococcus faecalis (strain ATCC 700802 / V583).